A 248-amino-acid polypeptide reads, in one-letter code: Probable transcriptional regulator LumQ (248 aa).

An HTH araC/xylS-type domain is found at 148–246 (VLIDNYIEQH…GMSPTRYQFF (99 aa)). 2 consecutive DNA-binding regions (H-T-H motif) follow at residues 165–186 (AELSSVAFLAQSQFYALFKSQM) and 213–236 (LSQVAQLCGFSSQSSFSQAFRRLY).

Probable transcriptional regulator. Its target gene(s) is not yet known. The polypeptide is Probable transcriptional regulator LumQ (lumQ) (Photobacterium leiognathi).